We begin with the raw amino-acid sequence, 505 residues long: Probable ribonuclease FAU-1 (505 aa).

Positions 389 to 408 (ISGHGSGTYDELGTPRESGD) are disordered.

Belongs to the FAU-1 family.

In terms of biological role, probable RNase involved in rRNA stability through maturation and/or degradation of precursor rRNAs. Binds to RNA in loop regions with AU-rich sequences. The protein is Probable ribonuclease FAU-1 of Haloquadratum walsbyi (strain DSM 16790 / HBSQ001).